The sequence spans 226 residues: UPF0173 metal-dependent hydrolase GFO_2312 (226 aa).

It belongs to the UPF0173 family.

The chain is UPF0173 metal-dependent hydrolase GFO_2312 from Christiangramia forsetii (strain DSM 17595 / CGMCC 1.15422 / KT0803) (Gramella forsetii).